Reading from the N-terminus, the 83-residue chain is Putative defensin-like protein 257 (83 aa).

Residues 1 to 25 form the signal peptide; it reads MMNVSLKLSFLVFILVIMSNLGSEA. Cystine bridges form between C57–C73, C63–C80, and C67–C82.

The protein belongs to the DEFL family.

The protein resides in the secreted. In Arabidopsis thaliana (Mouse-ear cress), this protein is Putative defensin-like protein 257.